The following is a 355-amino-acid chain: LIM/homeobox protein lim-4 (355 aa).

LIM zinc-binding domains lie at 96-155 (VICT…THVT) and 166-228 (PKCA…LVEG). The homeobox DNA-binding region spans 239 to 298 (TKRVRTTFAEDQLSVLQTYFNRDSNPDGADLEKIASMTGLSKRVTQVWFQNSRARQKKWH). The interval 291-336 (RARQKKWHQKSEGDNGDSQRSSVGPSSPSQKSDSSSEMMYPTSVTT) is disordered. Positions 306-326 (GDSQRSSVGPSSPSQKSDSSS) are enriched in low complexity.

As to quaternary structure, interacts with transcription factor sox-2. In terms of tissue distribution, expressed in the AWB sensory neurons and in one RME motor neuron (RMEV), two RMD motor neurons (RMDL and RMDR), the RID, RIV, SAA and SIA interneurons and the SMB sensory/inter/motor neurons.

Its subcellular location is the nucleus. Functionally, transcription factor that binds to the promoter of target genes. Regulates genes involved in serotonin synthesis and release in serotonergic ADF neurons. Involved in specification of neuron cell fate, olfactory receptor expression, locomotion, and foraging behavior. Required in AWB olfactory neurons to repress AWC cell fate and promote the AWB cell fate during early development. Cooperates with additional factors to direct the differentiation of the olfactory neurons, functioning with the transcription factor sox-2 to suppress AWC terminal differentiation and promote AWB neuron differentiation. Involved in regulating terminal specification and maintenance of the SMB sensory/inter/motor neurons. Plays a role in regulation of RID motor neuron differentiation, but is dispensable for motor axon outgrowth in the dorsal nerve cord. May regulate its own expression. This is LIM/homeobox protein lim-4 from Caenorhabditis elegans.